Reading from the N-terminus, the 264-residue chain is Thymidylate synthase (264 aa).

A dUMP-binding site is contributed by Arg-21. (6R)-5,10-methylene-5,6,7,8-tetrahydrofolate is bound at residue His-51. 126–127 (RR) serves as a coordination point for dUMP. Cys-146 serves as the catalytic Nucleophile. DUMP-binding positions include 166 to 169 (RSAD), Asn-177, and 207 to 209 (HLY). A (6R)-5,10-methylene-5,6,7,8-tetrahydrofolate-binding site is contributed by Asp-169. Ala-263 contributes to the (6R)-5,10-methylene-5,6,7,8-tetrahydrofolate binding site.

It belongs to the thymidylate synthase family. Bacterial-type ThyA subfamily. In terms of assembly, homodimer.

The protein resides in the cytoplasm. It carries out the reaction dUMP + (6R)-5,10-methylene-5,6,7,8-tetrahydrofolate = 7,8-dihydrofolate + dTMP. The protein operates within pyrimidine metabolism; dTTP biosynthesis. Catalyzes the reductive methylation of 2'-deoxyuridine-5'-monophosphate (dUMP) to 2'-deoxythymidine-5'-monophosphate (dTMP) while utilizing 5,10-methylenetetrahydrofolate (mTHF) as the methyl donor and reductant in the reaction, yielding dihydrofolate (DHF) as a by-product. This enzymatic reaction provides an intracellular de novo source of dTMP, an essential precursor for DNA biosynthesis. In Paramagnetospirillum magneticum (strain ATCC 700264 / AMB-1) (Magnetospirillum magneticum), this protein is Thymidylate synthase.